A 782-amino-acid chain; its full sequence is MTSIIKLTTLSGVQEESALCYLLQVDEFRFLLDCGWDEHFSMDIIDSLRKHVHQIDAVLLSHPDPLHLGALPYAVGKLGLNCAIYATIPVYKMGQMFMYDLYQSRHNTEDFTLFTLDDVDAAFDKIQQLKFSQIVNLKGKGHGLSITPLPAGHMIGGTIWKIVKDGEEEIVYAVDFNHKREIHLNGCSLEMLSRPSLLITDSFNATYVQPRRKQRDEQLLTNVLETLRGDGNVLIAVDTAGRVLELAQLLDQIWRTKDAGLGVYSLALLNNVSYNVVEFSKSQVEWMSDKLMRCFEDKRNNPFQFRHLSLCHGLSDLARVPSPKVVLASQPDLECGFSRDLFIQWCQDPKNSIILTYRTTPGTLARFLIDNPSEKITEIELRKRVKLEGKELEEYLEKEKLKKEAAKKLEQSKEADIDSSDESDIEEDIDQPSAHKTKHDLMMKGEGSRKGSFFKQAKKSYPMFPAPEERIKWDEYGEIIKPEDFLVPELQATEEEKSKLESGLTNGDEPMDQDLSDVPTKCISTTESIEIKARVTYIDYEGRSDGDSIKKIINQMKPRQLIIVHGPPEASQDLAECCRAFGGKDIKVYMPKLHETVDATSETHIYQVRLKDSLVSSLQFCKAKDAELAWIDGVLDMRVSKVDTGVILEEGELKDDGEDSEMQVEAPSDSSVIAQQKAMKSLFGDDEKETGEESEIIPTLEPLPPHEVPGHQSVFMNEPRLSDFKQVLLREGIQAEFVGGVLVCNNQVAVRRTETGRIGLEGCLCQDFYRIRDLLYEQYAIV.

Basic and acidic residues predominate over residues 407–416 (KKLEQSKEAD). Residues 407–449 (KKLEQSKEADIDSSDESDIEEDIDQPSAHKTKHDLMMKGEGSR) are disordered. The span at 417–430 (IDSSDESDIEEDID) shows a compositional bias: acidic residues. 3 positions are modified to phosphoserine: serine 419, serine 420, and serine 423. Basic and acidic residues predominate over residues 439–449 (HDLMMKGEGSR). Serine 660 carries the phosphoserine modification.

This sequence belongs to the metallo-beta-lactamase superfamily. RNA-metabolizing metallo-beta-lactamase-like family. CPSF2/YSH1 subfamily. Component of the cleavage and polyadenylation specificity factor (CPSF) complex, composed of CPSF1, CPSF2, CPSF3, CPSF4 and FIP1L1. Interacts with CPSF3, CSTF2 and SYMPK. Interacts with ZC3H3.

The protein localises to the nucleus. Its function is as follows. Component of the cleavage and polyadenylation specificity factor (CPSF) complex that play a key role in pre-mRNA 3'-end formation, recognizing the AAUAAA signal sequence and interacting with poly(A) polymerase and other factors to bring about cleavage and poly(A) addition. Involved in the histone 3' end pre-mRNA processing. This chain is Cleavage and polyadenylation specificity factor subunit 2 (CPSF2), found in Homo sapiens (Human).